Reading from the N-terminus, the 170-residue chain is Adenine phosphoribosyltransferase (170 aa).

It belongs to the purine/pyrimidine phosphoribosyltransferase family. As to quaternary structure, homodimer.

Its subcellular location is the cytoplasm. The enzyme catalyses AMP + diphosphate = 5-phospho-alpha-D-ribose 1-diphosphate + adenine. It functions in the pathway purine metabolism; AMP biosynthesis via salvage pathway; AMP from adenine: step 1/1. In terms of biological role, catalyzes a salvage reaction resulting in the formation of AMP, that is energically less costly than de novo synthesis. In Acholeplasma laidlawii (strain PG-8A), this protein is Adenine phosphoribosyltransferase.